We begin with the raw amino-acid sequence, 818 residues long: RNA-directed RNA polymerase (818 aa).

The RdRp catalytic domain maps to 524 to 641 (PVAIGLDASR…IVERRNLKQI (118 aa)).

This sequence belongs to the tombusviridae RNA polymerase family.

It carries out the reaction RNA(n) + a ribonucleoside 5'-triphosphate = RNA(n+1) + diphosphate. Functionally, RNA-dependent RNA polymerase that plays an essential role in the virus replication. The sequence is that of RNA-directed RNA polymerase from Cucumis sativus (Cucumber).